A 202-amino-acid polypeptide reads, in one-letter code: Lipid A acyltransferase PagP (202 aa).

The signal sequence occupies residues Met1–Ala25. Residues His74, Asp117, and Ser118 contribute to the active site.

Belongs to the lipid A palmitoyltransferase family. In terms of assembly, homodimer.

Its subcellular location is the cell outer membrane. The catalysed reaction is a lipid A + a 1,2-diacyl-sn-glycero-3-phosphocholine = a hepta-acyl lipid A + a 2-acyl-sn-glycero-3-phosphocholine. The enzyme catalyses a lipid IVA + a 1,2-diacyl-sn-glycero-3-phosphocholine = a lipid IVB + a 2-acyl-sn-glycero-3-phosphocholine. It catalyses the reaction a lipid IIA + a 1,2-diacyl-sn-glycero-3-phosphocholine = a lipid IIB + a 2-acyl-sn-glycero-3-phosphocholine. Its function is as follows. Transfers a fatty acid residue from the sn-1 position of a phospholipid to the N-linked hydroxyfatty acid chain on the proximal unit of lipid A or its precursors. The chain is Lipid A acyltransferase PagP from Yersinia pseudotuberculosis serotype IB (strain PB1/+).